A 221-amino-acid chain; its full sequence is Thiol:disulfide interchange protein TlpA (221 aa).

The Cytoplasmic portion of the chain corresponds to 1 to 11 (MLDTKPSATRR). Residues 12 to 35 (IPLVIATVAVGGLAGFAALYGLGL) form a helical membrane-spanning segment. Topologically, residues 36 to 221 (SRAPTGDPAC…AATGKAAAAL (186 aa)) are periplasmic. 2 cysteine pairs are disulfide-bonded: cysteine 45-cysteine 190 and cysteine 107-cysteine 110. Residues 69–215 (ASAPLKLPDL…ALKLIRAATG (147 aa)) form the Thioredoxin domain.

It belongs to the thioredoxin family. As to quaternary structure, monomer.

The protein resides in the cell membrane. Its function is as follows. Involved in cytochrome aa3 assembly. The chain is Thiol:disulfide interchange protein TlpA (tlpA) from Bradyrhizobium diazoefficiens (strain JCM 10833 / BCRC 13528 / IAM 13628 / NBRC 14792 / USDA 110).